The following is a 443-amino-acid chain: Sulfoquinovose isomerase (443 aa).

This sequence belongs to the SqvD family.

The catalysed reaction is 6-sulfo-beta-D-quinovose = 6-deoxy-6-sulfo-D-fructose. Its function is as follows. Part of the sulfo-EMP2 pathway, a D-sulfoquinovose degradation pathway that produces sulfolactate (SL). Catalyzes the isomerization of sulfoquinovose (SQ) to 6-deoxy-6-sulfo-D-fructose (SF). In Alkalicoccus urumqiensis (Bacillus urumqiensis), this protein is Sulfoquinovose isomerase.